Here is a 438-residue protein sequence, read N- to C-terminus: Methylenetetrahydrofolate--tRNA-(uracil-5-)-methyltransferase TrmFO (438 aa).

Residue 9-14 participates in FAD binding; it reads GGGLAG.

The protein belongs to the MnmG family. TrmFO subfamily. Requires FAD as cofactor.

The protein resides in the cytoplasm. The catalysed reaction is uridine(54) in tRNA + (6R)-5,10-methylene-5,6,7,8-tetrahydrofolate + NADH + H(+) = 5-methyluridine(54) in tRNA + (6S)-5,6,7,8-tetrahydrofolate + NAD(+). It carries out the reaction uridine(54) in tRNA + (6R)-5,10-methylene-5,6,7,8-tetrahydrofolate + NADPH + H(+) = 5-methyluridine(54) in tRNA + (6S)-5,6,7,8-tetrahydrofolate + NADP(+). In terms of biological role, catalyzes the folate-dependent formation of 5-methyl-uridine at position 54 (M-5-U54) in all tRNAs. The protein is Methylenetetrahydrofolate--tRNA-(uracil-5-)-methyltransferase TrmFO of Lactobacillus gasseri (strain ATCC 33323 / DSM 20243 / BCRC 14619 / CIP 102991 / JCM 1131 / KCTC 3163 / NCIMB 11718 / NCTC 13722 / AM63).